The sequence spans 71 residues: U3-agatoxin-Ao1a (71 aa).

The signal sequence occupies residues 1–20; the sequence is MKAVIFFCLLSVMVFTVIEA. Positions 21–33 are excised as a propeptide; sequence VKEEGTKPAEAAR. 4 cysteine pairs are disulfide-bonded: Cys-35-Cys-51, Cys-42-Cys-56, Cys-50-Cys-66, and Cys-58-Cys-64. Ser-70 is subject to Serine amide.

Belongs to the neurotoxin 07 (Beta/delta-agtx) family. 01 (aga-2) subfamily. Expressed by the venom gland.

The protein resides in the secreted. Its function is as follows. Insecticidal neurotoxin that modulates the insect Nav channel (DmNaV1/tipE (para/tipE)) in a unique manner, with both the activation and inactivation processes being affected. The voltage dependence of activation is shifted toward more hyperpolarized potentials (analogous to site 4 toxins) and a non-inactivating persistent sodium current is induced (site 3-like action). Interestingly, both effects take place in a voltage-dependent manner, producing a bell-shaped curve between -80 and 0 mV. Compared to beta/delta-agatoxin-1 to -3, this toxin appears to affect the insect sodium channel only weakly. The protein is U3-agatoxin-Ao1a of Agelena orientalis (Funnel-web spider).